Reading from the N-terminus, the 259-residue chain is UPF0246 protein SG0407 (259 aa).

The protein belongs to the UPF0246 family.

In Sodalis glossinidius (strain morsitans), this protein is UPF0246 protein SG0407.